The sequence spans 118 residues: Basic phospholipase A2 CM-II (118 aa).

7 disulfide bridges follow: cysteine 11-cysteine 70, cysteine 26-cysteine 117, cysteine 28-cysteine 44, cysteine 43-cysteine 98, cysteine 50-cysteine 91, cysteine 59-cysteine 84, and cysteine 77-cysteine 89. Residues tyrosine 27, glycine 29, and glycine 31 each coordinate Ca(2+). Histidine 47 is an active-site residue. Aspartate 48 is a binding site for Ca(2+). The active site involves aspartate 92.

It belongs to the phospholipase A2 family. Group I subfamily. D49 sub-subfamily. Ca(2+) is required as a cofactor. Expressed by the venom gland.

The protein localises to the secreted. The enzyme catalyses a 1,2-diacyl-sn-glycero-3-phosphocholine + H2O = a 1-acyl-sn-glycero-3-phosphocholine + a fatty acid + H(+). Functionally, snake venom phospholipase A2 (PLA2) that causes myonecrosis when injected intramuscularly, causes neuromuscular blockade with a gradual contracture and a decreased sensitivity to ACh and KCl (in the chick biventer cervicis nerve-muscle preparation), abolishes twitches evoked by indirect stimulation earlier than those by direct stimulation (in the mouse phrenic nerve-diaphragm preparation), shows indirect hemolytic activity, and shows weak anticoagulant activity. PLA2 catalyzes the calcium-dependent hydrolysis of the 2-acyl groups in 3-sn-phosphoglycerides. In Naja mossambica (Mozambique spitting cobra), this protein is Basic phospholipase A2 CM-II.